We begin with the raw amino-acid sequence, 400 residues long: Formate-dependent phosphoribosylglycinamide formyltransferase (400 aa).

N(1)-(5-phospho-beta-D-ribosyl)glycinamide contacts are provided by residues 21-22 (EL) and Glu-81. ATP-binding positions include Arg-114, Lys-155, 160 to 165 (SSGKGQ), 195 to 198 (EGRI), and Glu-203. The 195-residue stretch at 119-313 (RLAAEKLGLP…EFELHVRAIL (195 aa)) folds into the ATP-grasp domain. 2 residues coordinate Mg(2+): Glu-272 and Glu-284. N(1)-(5-phospho-beta-D-ribosyl)glycinamide contacts are provided by residues Asp-291, Lys-360, and 367–368 (RR).

The protein belongs to the PurK/PurT family. As to quaternary structure, homodimer.

It carries out the reaction N(1)-(5-phospho-beta-D-ribosyl)glycinamide + formate + ATP = N(2)-formyl-N(1)-(5-phospho-beta-D-ribosyl)glycinamide + ADP + phosphate + H(+). It participates in purine metabolism; IMP biosynthesis via de novo pathway; N(2)-formyl-N(1)-(5-phospho-D-ribosyl)glycinamide from N(1)-(5-phospho-D-ribosyl)glycinamide (formate route): step 1/1. In terms of biological role, involved in the de novo purine biosynthesis. Catalyzes the transfer of formate to 5-phospho-ribosyl-glycinamide (GAR), producing 5-phospho-ribosyl-N-formylglycinamide (FGAR). Formate is provided by PurU via hydrolysis of 10-formyl-tetrahydrofolate. This Methylococcus capsulatus (strain ATCC 33009 / NCIMB 11132 / Bath) protein is Formate-dependent phosphoribosylglycinamide formyltransferase.